The chain runs to 528 residues: MLAKISSSAKRFVHRSLVVRGNAATFPLSFSFCRRRAFSGKTSYDYREVLRTGLSDIELDDAIGLFGVMAQSRPFPSIIEFSKLLSAIAKMNKFDLVISFGEKMEILGISHNLYTYNILINCFCRCSRLSLALALLGKMMKLGYEPDIVTLNSLLNGFCHGNRISDAVALVDQMVEMGYKPDTVTFTTLIHGLFLHNKASEAVALIDRMVQRGCQPDLVTYGAVVNGLCKRGDTDLALNLLNKMEAAKIEANVVIYSTVIDSLCKYRHEDDALNLFTEMENKGVRPNVITYSSLISCLCNYGRWSDASRLLSDMIERKINPNLVTFSALIDAFVKKGKLVKAEKLYEEMIKRSIDPNIFTYSSLINGFCMLDRLGEAKQMLELMIRKDCLPNVVTYNTLINGFCKAKRVDKGMELFREMSQRGLVGNTVTYTTLIHGFFQARDCDNAQMVFKQMVSVGVHPNILTYNILLDGLCKNGKLAKAMVVFEYLQRSTMEPDIYTYNIMIEGMCKAGKWKMGGIYFVASALKE.

Residues 1-20 (MLAKISSSAKRFVHRSLVVR) constitute a mitochondrion transit peptide. PPR repeat units lie at residues 77 to 111 (SIIE…GISH), 112 to 146 (NLYT…GYEP), 147 to 181 (DIVT…GYKP), 182 to 216 (DTVT…GCQP), 217 to 251 (DLVT…KIEA), 252 to 286 (NVVI…GVRP), 287 to 321 (NVIT…KINP), 322 to 356 (NLVT…SIDP), 357 to 391 (NIFT…DCLP), 392 to 426 (NVVT…GLVG), 427 to 461 (NTVT…GVHP), 462 to 496 (NILT…TMEP), and 497 to 528 (DIYT…ALKE).

The protein belongs to the PPR family. P subfamily.

It is found in the mitochondrion. In Arabidopsis thaliana (Mouse-ear cress), this protein is Pentatricopeptide repeat-containing protein At1g62914, mitochondrial.